The following is a 38-amino-acid chain: Toxin Lqh 8/6 (38 aa).

4 disulfide bridges follow: Cys-2/Cys-19, Cys-5/Cys-28, Cys-16/Cys-33, and Cys-20/Cys-35.

As to expression, expressed by the venom gland.

It is found in the secreted. In terms of biological role, toxin with unknown function in healthy organisms. On glioma cells, interacts with chloride channels (probably ClC-3/CLCN3) and MMP2 at the surface of glioma cells. This complex is then internalized via caveolae, thus inhibiting the chloride channels necessary for cell shrinkage and tumor propagation. The sequence is that of Toxin Lqh 8/6 from Leiurus hebraeus (Hebrew deathstalker scorpion).